A 231-amino-acid chain; its full sequence is Ion-translocating oxidoreductase complex subunit E (231 aa).

Helical transmembrane passes span 18–38, 39–59, 63–83, 86–106, 125–145, and 182–202; these read ALVQ…ATNA, LGLG…ISTL, TPAE…VSAV, LINA…PLIV, ALSA…MFVL, and PFLL…MLAG.

The protein belongs to the NqrDE/RnfAE family. As to quaternary structure, the complex is composed of six subunits: RsxA, RsxB, RsxC, RsxD, RsxE and RsxG.

The protein localises to the cell inner membrane. Its function is as follows. Part of a membrane-bound complex that couples electron transfer with translocation of ions across the membrane. Required to maintain the reduced state of SoxR. This Escherichia coli O127:H6 (strain E2348/69 / EPEC) protein is Ion-translocating oxidoreductase complex subunit E.